Reading from the N-terminus, the 390-residue chain is Putative transposase y4qE (390 aa).

Belongs to the transposase IS1111A/IS1328/IS1533 family.

This chain is Putative transposase y4qE, found in Sinorhizobium fredii (strain NBRC 101917 / NGR234).